A 379-amino-acid chain; its full sequence is Glucose-insensitive transcription protein 7 (379 aa).

In terms of domain architecture, CS spans 181–272; it reads SNRIRYDWSQ…VSEIKWEALV (92 aa). An SGS domain is found at 292 to 379; it reads ASGNTKNKAK…PPQGMEPKKF (88 aa). The disordered stretch occupies residues 345-379; it reads SYTESNGTALSTNWKDVKSKTFETKPPQGMEPKKF. The span at 346–358 shows a compositional bias: polar residues; that stretch reads YTESNGTALSTNW.

Its function is as follows. Involved in cyclic AMP (cAMP) pathway, possibly by participating in the assembly or the conformational activation of specific multiprotein complexes. The sequence is that of Glucose-insensitive transcription protein 7 (git7) from Schizosaccharomyces pombe (strain 972 / ATCC 24843) (Fission yeast).